Reading from the N-terminus, the 467-residue chain is ADP-dependent glucose/glucosamine kinase (467 aa).

The ADPK domain occupies 10–467 (RLWKRLYVNA…FVSEFGMRKR (458 aa)). D-glucose is bound by residues aspartate 42, glutamate 96, glycine 120, 120–121 (GQ), histidine 184, and aspartate 211. Glutamate 279 is a binding site for Mg(2+). ADP is bound at residue asparagine 305. Glutamate 308 serves as a coordination point for Mg(2+). Residues 352 to 353 (HT), valine 440, and glycine 450 contribute to the ADP site. A D-glucose-binding site is contributed by aspartate 451. Residue aspartate 451 coordinates Mg(2+). The active-site Proton acceptor is the aspartate 451.

This sequence belongs to the ADP-dependent glucokinase family. Monomer. Mg(2+) serves as cofactor.

The protein localises to the cytoplasm. It carries out the reaction D-glucose + ADP = D-glucose 6-phosphate + AMP + H(+). The catalysed reaction is D-glucosamine + ADP = D-glucosamine 6-phosphate + AMP + H(+). The protein operates within carbohydrate degradation; glycolysis. Functionally, catalyzes the ADP-dependent phosphorylation of D-glucose to D-glucose 6-phosphate and glucosamine to glucosamine 6-phosphate. Can also use CDP as the phosphoryl group donor and D-1,5-anhydroglucitol as the phosphoryl group acceptor. This is ADP-dependent glucose/glucosamine kinase from Thermococcus litoralis (strain ATCC 51850 / DSM 5473 / JCM 8560 / NS-C).